The sequence spans 410 residues: Acetate kinase (410 aa).

Asn7 lines the Mg(2+) pocket. Lys14 contributes to the ATP binding site. Arg88 is a substrate binding site. Residue Asp145 is the Proton donor/acceptor of the active site. ATP contacts are provided by residues 203-207, 278-280, and 326-330; these read HAGNG, DTR, and GIGEN. Glu379 provides a ligand contact to Mg(2+).

Belongs to the acetokinase family. In terms of assembly, homodimer. It depends on Mg(2+) as a cofactor. Mn(2+) is required as a cofactor.

It localises to the cytoplasm. The catalysed reaction is acetate + ATP = acetyl phosphate + ADP. The protein operates within metabolic intermediate biosynthesis; acetyl-CoA biosynthesis; acetyl-CoA from acetate: step 1/2. Catalyzes the formation of acetyl phosphate from acetate and ATP. Can also catalyze the reverse reaction. This is Acetate kinase from Aster yellows witches'-broom phytoplasma (strain AYWB).